The chain runs to 149 residues: Transcriptional repressor NrdR (149 aa).

A zinc finger spans residues C3–C34. The ATP-cone domain occupies P49 to E139.

Belongs to the NrdR family. It depends on Zn(2+) as a cofactor.

Its function is as follows. Negatively regulates transcription of bacterial ribonucleotide reductase nrd genes and operons by binding to NrdR-boxes. The polypeptide is Transcriptional repressor NrdR (Polaromonas naphthalenivorans (strain CJ2)).